The following is a 239-amino-acid chain: Methylthioribulose-1-phosphate dehydratase (239 aa).

Cys94 contributes to the substrate binding site. The Zn(2+) site is built by His112 and His114. Glu136 serves as the catalytic Proton donor/acceptor. His192 lines the Zn(2+) pocket.

This sequence belongs to the aldolase class II family. MtnB subfamily. Zn(2+) is required as a cofactor.

Its subcellular location is the cytoplasm. The catalysed reaction is 5-(methylsulfanyl)-D-ribulose 1-phosphate = 5-methylsulfanyl-2,3-dioxopentyl phosphate + H2O. It functions in the pathway amino-acid biosynthesis; L-methionine biosynthesis via salvage pathway; L-methionine from S-methyl-5-thio-alpha-D-ribose 1-phosphate: step 2/6. In terms of biological role, catalyzes the dehydration of methylthioribulose-1-phosphate (MTRu-1-P) into 2,3-diketo-5-methylthiopentyl-1-phosphate (DK-MTP-1-P). Functions in the methionine salvage pathway. May play a role in apoptosis. The chain is Methylthioribulose-1-phosphate dehydratase from Xenopus tropicalis (Western clawed frog).